The sequence spans 160 residues: Protein-export protein SecB (160 aa).

Belongs to the SecB family. As to quaternary structure, homotetramer, a dimer of dimers. One homotetramer interacts with 1 SecA dimer.

The protein resides in the cytoplasm. Functionally, one of the proteins required for the normal export of preproteins out of the cell cytoplasm. It is a molecular chaperone that binds to a subset of precursor proteins, maintaining them in a translocation-competent state. It also specifically binds to its receptor SecA. The chain is Protein-export protein SecB from Aliivibrio salmonicida (strain LFI1238) (Vibrio salmonicida (strain LFI1238)).